The following is a 70-amino-acid chain: Alpha-elapitoxin-Ast2a (70 aa).

5 disulfides stabilise this stretch: Cys3–Cys20, Cys13–Cys41, Cys26–Cys30, Cys45–Cys56, and Cys57–Cys62. Ser70 carries the serine amide modification.

The protein belongs to the three-finger toxin family. Long-chain subfamily. Type II alpha-neurotoxin sub-subfamily. In terms of tissue distribution, expressed by the venom gland.

It is found in the secreted. In terms of biological role, binds with high affinity to muscular (alpha-1/CHRNA1) and neuronal (alpha-7/CHRNA7) nicotinic acetylcholine receptor (nAChR) and inhibits acetylcholine from binding to the receptor, thereby impairing neuromuscular and neuronal transmission. This Hydrophis stokesii (Stokes's sea snake) protein is Alpha-elapitoxin-Ast2a.